Reading from the N-terminus, the 257-residue chain is MSKLKLNDVNIYYGDFHAVQNVNLEVPARSVTAFIGPSGCGKSTVLRSINRMHEVTPGAYVKGEILLDGENIYGSKIDPVAVRNTIGMVFQKANPFPTMSIEDNVVAGLKLSGEKNKKKLKEVAEKSLRGANLWEEVKDRLDKPGGGLSGGQQQRLCIARAIAVEPEILLMDEPCSALDPISTLAVEDLIHELKEEFTIVIVTHNMQQAARVSDQTAFYSLEATGRPGRLVEIGPTKKIFENPDQKETEDYISGRFG.

Residues 4 to 246 (LKLNDVNIYY…KKIFENPDQK (243 aa)) enclose the ABC transporter domain. 36–43 (GPSGCGKS) serves as a coordination point for ATP.

It belongs to the ABC transporter superfamily. Phosphate importer (TC 3.A.1.7) family. In terms of assembly, the complex is composed of two ATP-binding proteins (PstB), two transmembrane proteins (PstC and PstA) and a solute-binding protein (PstS).

It is found in the cell membrane. It catalyses the reaction phosphate(out) + ATP + H2O = ADP + 2 phosphate(in) + H(+). Functionally, part of the ABC transporter complex PstSACB involved in phosphate import. Responsible for energy coupling to the transport system. The chain is Phosphate import ATP-binding protein PstB from Corynebacterium glutamicum (strain ATCC 13032 / DSM 20300 / JCM 1318 / BCRC 11384 / CCUG 27702 / LMG 3730 / NBRC 12168 / NCIMB 10025 / NRRL B-2784 / 534).